The primary structure comprises 348 residues: Ion-translocating oxidoreductase complex subunit D (348 aa).

The next 3 membrane-spanning stretches (helical) occupy residues 20-39 (LMKW…TYFF), 72-91 (ALRD…AIPP), and 120-140 (PFNP…VQMT). Thr187 carries the FMN phosphoryl threonine modification. 5 helical membrane-spanning segments follow: residues 214–234 (LAGV…LVLI), 241–261 (WHIP…FLMF), 266–286 (TASP…FFIA), 300–320 (LVFG…GGFP), and 321–341 (DGVA…DYYT).

This sequence belongs to the NqrB/RnfD family. In terms of assembly, the complex is composed of six subunits: RnfA, RnfB, RnfC, RnfD, RnfE and RnfG. FMN serves as cofactor.

It localises to the cell inner membrane. Functionally, part of a membrane-bound complex that couples electron transfer with translocation of ions across the membrane. The polypeptide is Ion-translocating oxidoreductase complex subunit D (Vibrio atlanticus (strain LGP32) (Vibrio splendidus (strain Mel32))).